The chain runs to 361 residues: Flagellar P-ring protein (361 aa).

Residues M1–A18 form the signal peptide.

It belongs to the FlgI family. The basal body constitutes a major portion of the flagellar organelle and consists of four rings (L,P,S, and M) mounted on a central rod.

The protein localises to the periplasm. It localises to the bacterial flagellum basal body. Assembles around the rod to form the L-ring and probably protects the motor/basal body from shearing forces during rotation. This is Flagellar P-ring protein from Vibrio cholerae serotype O1 (strain ATCC 39541 / Classical Ogawa 395 / O395).